A 94-amino-acid polypeptide reads, in one-letter code: Small polypeptide ROTUNDIFOLIA LIKE 1 (94 aa).

The segment covering 1 to 13 (MRQCASASSSTSR) has biased composition (polar residues). The segment at 1-26 (MRQCASASSSTSRPPEAAGEEGKRRR) is disordered. The tract at residues 28–59 (RRGWLLQAAAREQRSRFYIFRRCVAMLLCWYK) is required for DVL/RTFL small polypeptide activity. Residues 63–82 (ITPYNVVPLGIYGLVWFATM) form a helical membrane-spanning segment.

This sequence belongs to the DVL/RTFL small polypeptides family.

The protein localises to the cell membrane. Functionally, small polypeptide acting as a regulatory molecule which coordinates cellular responses required for differentiation, growth and development, probably by restricting polar cell proliferation in lateral organs. The sequence is that of Small polypeptide ROTUNDIFOLIA LIKE 1 from Oryza sativa subsp. japonica (Rice).